Consider the following 83-residue polypeptide: Bublin coiled-coil protein (83 aa).

The interval 1–24 (MSGPNGDLGMPVEAGAEGEEDGFG) is disordered. Residues 25–74 (EAEYAAINSMLDQINSCLDHLEEKNDHLHARLQELLESNRQTRLEFQQQL) are a coiled coil. S82 is subject to Phosphoserine.

It belongs to the UPF0184 (EST00098) family.

It localises to the cell junction. The protein localises to the cytoplasm. Its subcellular location is the cytoskeleton. Essential for intermediate filament organization in intestinal cells, interacts with intermediate filament and regulates intestinal lumen morphology. This chain is Bublin coiled-coil protein, found in Homo sapiens (Human).